The chain runs to 354 residues: tRNA N6-adenosine threonylcarbamoyltransferase (354 aa).

Residues histidine 111 and histidine 115 each contribute to the Fe cation site. Substrate contacts are provided by residues leucine 134 to glycine 138, aspartate 167, glycine 180, and asparagine 279. Aspartate 319 serves as a coordination point for Fe cation.

This sequence belongs to the KAE1 / TsaD family. Fe(2+) is required as a cofactor.

The protein localises to the cytoplasm. The catalysed reaction is L-threonylcarbamoyladenylate + adenosine(37) in tRNA = N(6)-L-threonylcarbamoyladenosine(37) in tRNA + AMP + H(+). Required for the formation of a threonylcarbamoyl group on adenosine at position 37 (t(6)A37) in tRNAs that read codons beginning with adenine. Is involved in the transfer of the threonylcarbamoyl moiety of threonylcarbamoyl-AMP (TC-AMP) to the N6 group of A37, together with TsaE and TsaB. TsaD likely plays a direct catalytic role in this reaction. The polypeptide is tRNA N6-adenosine threonylcarbamoyltransferase (Neisseria gonorrhoeae (strain ATCC 700825 / FA 1090)).